A 193-amino-acid polypeptide reads, in one-letter code: Probable DNA-directed RNA polymerase subunit delta (193 aa).

Residues 14-81 enclose the HTH HARE-type domain; sequence LALVEIATAI…GNNEWGLRAW (68 aa). Acidic residues-rich tracts occupy residues 119–174 and 182–193; these read DDDV…DDNL and DLDDLSDGDIEK. Positions 119-193 are disordered; it reads DDDVIDYNDD…DDLSDGDIEK (75 aa).

It belongs to the RpoE family. In terms of assembly, RNAP is composed of a core of 2 alpha, a beta and a beta' subunits. The core is associated with a delta subunit and one of several sigma factors.

Participates in both the initiation and recycling phases of transcription. In the presence of the delta subunit, RNAP displays an increased specificity of transcription, a decreased affinity for nucleic acids, and an increased efficiency of RNA synthesis because of enhanced recycling. This Leuconostoc citreum (strain KM20) protein is Probable DNA-directed RNA polymerase subunit delta.